The primary structure comprises 118 residues: Large ribosomal subunit protein bL17 (118 aa).

It belongs to the bacterial ribosomal protein bL17 family. In terms of assembly, part of the 50S ribosomal subunit. Contacts protein L32.

The chain is Large ribosomal subunit protein bL17 from Phytoplasma mali (strain AT).